We begin with the raw amino-acid sequence, 275 residues long: Large ribosomal subunit protein uL2 (275 aa).

Positions 223–275 (AAMNANDHPHGGGEAKAGQGNPHPVTPWGVPTKGYKTRKNKRTQQFIVRDRRG) are disordered.

It belongs to the universal ribosomal protein uL2 family. In terms of assembly, part of the 50S ribosomal subunit. Forms a bridge to the 30S subunit in the 70S ribosome.

One of the primary rRNA binding proteins. Required for association of the 30S and 50S subunits to form the 70S ribosome, for tRNA binding and peptide bond formation. It has been suggested to have peptidyltransferase activity; this is somewhat controversial. Makes several contacts with the 16S rRNA in the 70S ribosome. In Xanthomonas campestris pv. campestris (strain 8004), this protein is Large ribosomal subunit protein uL2.